A 217-amino-acid polypeptide reads, in one-letter code: Lipoprotein CseA (217 aa).

Positions 1–34 (MRGLGTESLRARGALKAAIAAVAGLAVLGLSVSA) are cleaved as a signal peptide. Cys-35 is lipidated: N-palmitoyl cysteine. The S-diacylglycerol cysteine moiety is linked to residue Cys-35. 2 disordered regions span residues 39 to 66 (GTGA…SPSK) and 192 to 217 (FSEE…PAPN).

The protein resides in the cell membrane. May be involved in the stabilization of the cell envelope or may interact with the sensor protein CseC to modulate its activity, in response to cell envelope stress. This chain is Lipoprotein CseA (cseA), found in Streptomyces avermitilis (strain ATCC 31267 / DSM 46492 / JCM 5070 / NBRC 14893 / NCIMB 12804 / NRRL 8165 / MA-4680).